A 459-amino-acid chain; its full sequence is FBD-associated F-box protein At5g27750 (459 aa).

An F-box domain is found at 4 to 50 (FDRISELPESLITQILLCLPTKDSVKTSVLSTRWKNLWLNVPGLDLT). The FBD domain maps to 374–426 (TEELNLINVPRCIVSTLECVEIKGLFEWEEEEMKIARYFLENAAVLKKLTMSF).

In Arabidopsis thaliana (Mouse-ear cress), this protein is FBD-associated F-box protein At5g27750.